A 367-amino-acid chain; its full sequence is Small ribosomal subunit protein uS2 (367 aa).

A disordered region spans residues 1–68; it reads MPKKAEAKTG…NSTPSTGSKF (68 aa). Residues 21–40 are compositionally biased toward basic and acidic residues; it reads AKKDVKAEVNETNKTAEKVS. Low complexity predominate over residues 53-66; sequence TNESSSNSTPSTGS.

It belongs to the universal ribosomal protein uS2 family.

The protein is Small ribosomal subunit protein uS2 of Malacoplasma penetrans (strain HF-2) (Mycoplasma penetrans).